The chain runs to 406 residues: NAC transcription factor NAM-1 (406 aa).

The span at Met1–Ala11 shows a compositional bias: polar residues. A disordered region spans residues Met1–Arg40. One can recognise an NAC domain in the interval Leu35–Lys204. A DNA-binding region spans residues Val137 to Ala210.

It localises to the nucleus. Its function is as follows. Transcription factor of the NAC family associated with the grain protein content (GPC). Accelerates senescence and increases nutrient remobilization from leaves to developing grains. Sequences of 11 European varieties of H.vulgare tested belongs to the same haplotype while the sequence found in H.spontaneum, an ancestor of the cultivated H.vulgare which has a higher GPC, belongs to an other haplotype. The polypeptide is NAC transcription factor NAM-1 (NAM-1) (Hordeum vulgare subsp. vulgare (Domesticated barley)).